The sequence spans 477 residues: Polyketide synthase-related protein Dhc1 (477 aa).

The Carrier domain occupies 34-112; sequence EKMTVREGEL…AMTHCVFDRA (79 aa). An O-(pantetheine 4'-phosphoryl)serine modification is found at serine 72. Residues 161 to 322 are ketoreductase (KR) domain; the sequence is LTGATSFLGS…AGEVFLENLV (162 aa). Residues 410–435 are disordered; the sequence is VQQQQQQQQRQSQPPRDDAADGSPTE. A compositionally biased stretch (low complexity) spans 411–422; sequence QQQQQQQQRQSQ. Over residues 424 to 435 the composition is skewed to basic and acidic residues; that stretch reads PRDDAADGSPTE.

It participates in mycotoxin biosynthesis. In terms of biological role, polyketide synthase-related protein; part of the gene cluster that mediates the biosynthesis of 10,11-dehydrocurvularin, a prevalent fungal phytotoxin with heat shock response and immune-modulatory activities. The highly reducing polyketide synthase Dhc3 is responsible for biosynthesis up to the tetraketide stage. The non-reducing polyketide synthase Dhc5 then conducts four additional chain extension cycles, producing the unreduced part of the nascent octaketide from C-1 to C-8 in 10,11-dehydrocurvularin. The role of Dhc1 in 10,11-dehydrocurvularin biosynthesis has not been identified yet. This chain is Polyketide synthase-related protein Dhc1, found in Alternaria cinerariae.